We begin with the raw amino-acid sequence, 270 residues long: DNA packaging protein OPG160 (270 aa).

25-32 (GGSGSGKT) provides a ligand contact to ATP.

It belongs to the orthopoxvirus OPG160 protein family. Interacts with protein OPG137.

In terms of biological role, participates in viral DNA packaging and virion morphogenesis. This chain is DNA packaging protein OPG160 (OPG160), found in Variola virus (isolate Human/India/Ind3/1967) (VARV).